Consider the following 301-residue polypeptide: MSNAALATAPHALELDVHPVAGRIGAEIRGVKLSPDLDAATVEAIQAALVRHKVIFFRGQTHLDDQSQEGFAKLLGEPVAHPTVPVVDGTRYLLQLDGAQGQRANSWHTDVTFVEAYPKASILRSVVAPASGGDTVWANTAAAYQELPEPLRELADKLWAVHSNEYDYASLKPDIDPAKLERHRKVFTSTVYETEHPVVRVHPISGERALQLGHFVKRIKGYSLADSQHLFAVLQGHVTRLENTVRWRWEAGDVAIWDNRATQHYAVDDYGTQPRIVRRVTLAGEVPVGVDGQLSRTTRKG.

His81 contacts substrate. Fe cation-binding residues include His108 and Asp110. A substrate-binding site is contributed by Val111. Thr135 provides a ligand contact to 2-oxoglutarate. Position 264 (His264) interacts with Fe cation. 2 residues coordinate 2-oxoglutarate: Arg275 and Arg279.

This sequence belongs to the TfdA dioxygenase family. Homotetramer. Fe(2+) serves as cofactor.

The enzyme catalyses a primary linear alkyl sulfate ester + 2-oxoglutarate + O2 = an aldehyde + sulfate + succinate + CO2 + H(+). It catalyses the reaction 2-ethylhexyl sulfate + 2-oxoglutarate + O2 = 2-ethylhexanal + sulfate + succinate + CO2 + H(+). The catalysed reaction is decyl sulfate + 2-oxoglutarate + O2 = decanal + sulfate + succinate + CO2 + H(+). It carries out the reaction hexyl sulfate + 2-oxoglutarate + O2 = hexanal + sulfate + succinate + CO2 + H(+). The enzyme catalyses nonyl sufate + 2-oxoglutarate + O2 = nonanal + sulfate + succinate + CO2 + H(+). Its activity is regulated as follows. Strongly stimulated by ascorbate. Its function is as follows. Catalyzes the oxygenolytic cleavage of 2-ethylhexyl sulfate (2-EHS) in the presence of alpha-ketoglutarate to yield 2-ethyl-hexanal and succinate, the decarboxylated form of alpha-ketoglutarate. It can accept a wide range of alpha-keto acids including 2-oxo-valerate, 2-oxo-adipate, 2-oxo-octanoate, 3-methyl-2-oxo-butyrate, oxaloacetate-alpha-ketoadipate, and alpha-ketooctanoate. It can catalyze the cleavage of medium-chain alkyl sulfate esters such as butylsulfate, pentylsulfate, hexylsulfate, heptylsulfate, octylsulfate, nonylsulfate, decylsulfate and sodium dodecyl sulfate (SDS). This is Alpha-ketoglutarate-dependent sulfate ester dioxygenase from Pseudomonas putida (Arthrobacter siderocapsulatus).